The following is a 360-amino-acid chain: tRNA-specific 2-thiouridylase MnmA (360 aa).

Residues glycine 8–serine 15 and methionine 34 contribute to the ATP site. Positions asparagine 94–aspartate 96 are interaction with target base in tRNA. The Nucleophile role is filled by cysteine 99. A disulfide bridge connects residues cysteine 99 and cysteine 195. Glycine 123 serves as a coordination point for ATP. The segment at lysine 145 to glutamine 147 is interaction with tRNA. The Cysteine persulfide intermediate role is filled by cysteine 195. An interaction with tRNA region spans residues arginine 307 to tyrosine 308.

This sequence belongs to the MnmA/TRMU family.

The protein resides in the cytoplasm. The catalysed reaction is S-sulfanyl-L-cysteinyl-[protein] + uridine(34) in tRNA + AH2 + ATP = 2-thiouridine(34) in tRNA + L-cysteinyl-[protein] + A + AMP + diphosphate + H(+). In terms of biological role, catalyzes the 2-thiolation of uridine at the wobble position (U34) of tRNA, leading to the formation of s(2)U34. The polypeptide is tRNA-specific 2-thiouridylase MnmA (Methylobacillus flagellatus (strain ATCC 51484 / DSM 6875 / VKM B-1610 / KT)).